The following is an 83-amino-acid chain: Hainantoxin-III 11 (83 aa).

The signal sequence occupies residues 1 to 21 (MKASMFLALAGLVLLFVVGYA). Positions 22–48 (SESEEKDFPRELLSKIFAVDDFKGEER) are excised as a propeptide. 3 cysteine pairs are disulfide-bonded: Cys-50/Cys-65, Cys-57/Cys-70, and Cys-64/Cys-77. A Leucine amide modification is found at Leu-81.

The protein belongs to the neurotoxin 10 (Hwtx-1) family. 15 (Hntx-3) subfamily. In terms of assembly, monomer. Expressed by the venom gland.

It localises to the secreted. Functionally, selective antagonist of neuronal tetrodotoxin (TTX)-sensitive voltage-gated sodium channels (IC(50)=1270 nM on Nav1.1/SCN1A, 270 nM on Nav1.2/SCN2A, 491 nM on Nav1.3/SCN3A and 232 nM on Nav1.7/SCN9A). This toxin suppress Nav1.7 current amplitude without significantly altering the activation, inactivation, and repriming kinetics. Short extreme depolarizations partially activate the toxin-bound channel, indicating voltage-dependent inhibition of this toxin. This toxin increases the deactivation of the Nav1.7 current after extreme depolarizations. The toxin-Nav1.7 complex is gradually dissociated upon prolonged strong depolarizations in a voltage-dependent manner, and the unbound toxin rebinds to Nav1.7 after a long repolarization. Moreover, analysis of chimeric channels showed that the DIIS3-S4 linker is critical for toxin binding to Nav1.7. These data are consistent with this toxin interacting with Nav1.7 site 4 and trapping the domain II voltage sensor in the closed state. This is Hainantoxin-III 11 from Cyriopagopus hainanus (Chinese bird spider).